The primary structure comprises 144 residues: Transcription antitermination protein NusB (144 aa).

It belongs to the NusB family.

Functionally, involved in transcription antitermination. Required for transcription of ribosomal RNA (rRNA) genes. Binds specifically to the boxA antiterminator sequence of the ribosomal RNA (rrn) operons. This chain is Transcription antitermination protein NusB, found in Haemophilus influenzae (strain PittEE).